The chain runs to 146 residues: Leghemoglobin-3 (146 aa).

In terms of domain architecture, Globin spans Gly2–Val146. Tyr29 bears the Nitrated tyrosine mark. Ser44 is a binding site for heme b. Ser44 is subject to Phosphoserine. Position 61 (His61) interacts with O2. Residues Lys64, His93, and Lys96 each coordinate heme b. At Tyr134 the chain carries Nitrated tyrosine.

The protein belongs to the plant globin family. As to quaternary structure, monomer. Nitrated in effective nodules and particularly in hypoxic conditions; this mechanism may play a protective role in the symbiosis by buffering toxic peroxynitrite NO(2)(-). Nitration level decrease during nodule senescence. In terms of processing, phosphorylation at Ser-44 disrupts the molecular environment of its porphyrin ring oxygen binding pocket, thus leading to a reduced oxygen consumption and to the delivery of oxygen O(2) to symbiosomes. As to expression, root nodules.

Its subcellular location is the cytoplasm. It is found in the cytosol. It localises to the nucleus. In terms of biological role, leghemoglobin that reversibly binds oxygen O(2) through a pentacoordinated heme iron. In root nodules, facilitates the diffusion of oxygen to the bacteroids while preventing the bacterial nitrogenase from being inactivated by buffering dioxygen, nitric oxide and carbon monoxide, and promoting the formation of reactive oxygen species (ROS, e.g. H(2)O(2)). This role is essential for symbiotic nitrogen fixation (SNF). The protein is Leghemoglobin-3 of Medicago sativa (Alfalfa).